The sequence spans 118 residues: Large ribosomal subunit protein uL18 (118 aa).

It belongs to the universal ribosomal protein uL18 family. As to quaternary structure, part of the 50S ribosomal subunit; part of the 5S rRNA/L5/L18/L25 subcomplex. Contacts the 5S and 23S rRNAs.

Functionally, this is one of the proteins that bind and probably mediate the attachment of the 5S RNA into the large ribosomal subunit, where it forms part of the central protuberance. The polypeptide is Large ribosomal subunit protein uL18 (Ligilactobacillus salivarius (strain UCC118) (Lactobacillus salivarius)).